Reading from the N-terminus, the 417-residue chain is Gamma-glutamyl phosphate reductase (417 aa).

This sequence belongs to the gamma-glutamyl phosphate reductase family.

The protein localises to the cytoplasm. The catalysed reaction is L-glutamate 5-semialdehyde + phosphate + NADP(+) = L-glutamyl 5-phosphate + NADPH + H(+). The protein operates within amino-acid biosynthesis; L-proline biosynthesis; L-glutamate 5-semialdehyde from L-glutamate: step 2/2. In terms of biological role, catalyzes the NADPH-dependent reduction of L-glutamate 5-phosphate into L-glutamate 5-semialdehyde and phosphate. The product spontaneously undergoes cyclization to form 1-pyrroline-5-carboxylate. The protein is Gamma-glutamyl phosphate reductase of Aeromonas salmonicida (strain A449).